We begin with the raw amino-acid sequence, 333 residues long: Glyceraldehyde-3-phosphate dehydrogenase 1 (333 aa).

NAD(+) is bound by residues 12 to 13 (RI), aspartate 35, and arginine 79. D-glyceraldehyde 3-phosphate contacts are provided by residues 152 to 154 (SCT), threonine 183, arginine 198, 211 to 212 (SG), and arginine 234. Residue cysteine 153 is the Nucleophile of the active site. Asparagine 314 is an NAD(+) binding site.

It belongs to the glyceraldehyde-3-phosphate dehydrogenase family. Homotetramer.

The protein localises to the cytoplasm. It carries out the reaction D-glyceraldehyde 3-phosphate + phosphate + NAD(+) = (2R)-3-phospho-glyceroyl phosphate + NADH + H(+). The protein operates within carbohydrate degradation; glycolysis; pyruvate from D-glyceraldehyde 3-phosphate: step 1/5. Its activity is regulated as follows. Resistant to pentalenolactone (PL). Catalyzes the oxidative phosphorylation of glyceraldehyde 3-phosphate (G3P) to 1,3-bisphosphoglycerate (BPG) using the cofactor NAD. The first reaction step involves the formation of a hemiacetal intermediate between G3P and a cysteine residue, and this hemiacetal intermediate is then oxidized to a thioester, with concomitant reduction of NAD to NADH. The reduced NADH is then exchanged with the second NAD, and the thioester is attacked by a nucleophilic inorganic phosphate to produce BPG. This chain is Glyceraldehyde-3-phosphate dehydrogenase 1 (gap1), found in Streptomyces arenae.